A 239-amino-acid chain; its full sequence is Lactate utilization protein A (239 aa).

It belongs to the LutA/YkgE family.

In terms of biological role, is involved in L-lactate degradation and allows cells to grow with lactate as the sole carbon source. In Bacillus cytotoxicus (strain DSM 22905 / CIP 110041 / 391-98 / NVH 391-98), this protein is Lactate utilization protein A.